We begin with the raw amino-acid sequence, 219 residues long: Transmembrane emp24 domain-containing protein 10 (219 aa).

The first 31 residues, 1-31 (MSGSSGPQAQRGPCPFALLLLLLLGPSSVLA), serve as a signal peptide directing secretion. Residues 1–142 (MSGSSGPQAQ…KNYEEIAKVE (142 aa)) are required for interaction with STX17. Topologically, residues 32–185 (ISFHLPVNSR…RDTNESTNTR (154 aa)) are lumenal. Residues 41-193 (RKCLREEIHK…TRVLYFSIFS (153 aa)) form the GOLD domain. The interval 147 to 178 (LEVELRRLEDLSESIVNDFAYMKKREEEMRDT) is required for TMED10 and TMED2 cis-Golgi network localization. Dimethylated arginine occurs at positions 171 and 176. N-linked (GlcNAc...) asparagine glycosylation occurs at Asn-179. The chain crosses the membrane as a helical span at residues 186–206 (VLYFSIFSMFCLIGLATWQVF). An interaction with COPG1 region spans residues 204–219 (QVFYLRRFFKAKKLIE). Over 207–219 (YLRRFFKAKKLIE) the chain is Cytoplasmic. The segment at 207-219 (YLRRFFKAKKLIE) is interaction with ARF1 and IL1B. A COPII vesicle coat-binding motif is present at residues 211–212 (FF). Positions 211–219 (FFKAKKLIE) match the COPI vesicle coat-binding motif.

It belongs to the EMP24/GP25L family. In terms of assembly, predominantly dimeric and to a lesser extent monomeric in the ER. Monomer and dimer in ERGIC and cis-Golgi network. Forms homooligomer (via GOLD domain); the assembly is promoted by direct binding with leaderless cargos and may form a protein channel that facilitates cargo entry into the ERGIC. Forms heterooligomeric complexes with other members of the p24 family such as TMED2, TMED7 and TMED9. Interacts (via GOLD domain) with TMED2 (via GOLD domain); the complex is required for export of TMED10 from the ER to the cis-Golgi network; the complex is proposed to be involved in cis-Golgi network dynamics and / or biogenesis. Associates with the COPI vesicle coat subunits (coatomer). Tetramerization of the cytoplasmic domain at the Golgi membrane in vitro; the complex is proposed to interact with COPI coatomer and induce budding of the vesicles. Interacts with COPG1; the interaction involves TMED10 homodimer. Interacts with ARF1 (GDP-bound); the interaction probably involves a TMED10 oligomer. Interacts with SEC23A, SEC24B, SEC24C and SEC24D components of the coat protein complex II/COPII, indicative of an association of TMED10 with the COPII vesicle coat. Interacts with CD59. Interacts with MPPE1/PGAP5; the complex might recruit and sort GPI-anchored proteins to the ER-exit site, or the interaction might lead to recycling of PGAP5 between the ER and the Golgi. Interacts with F2LR1/PAR2. Interacts with KDELR2/ERD2; the interaction is disrupted by KDELR2 ligand. Found in a complex composed at least of SURF4, TMED2 and TMED10. Associates with the presenilin-dependent gamma-secretase complex. Interacts with STX17; the interaction is direct. Interacts with IL-1; the interaction is direct. Interacts with RAB21 (active GTP-bound form); the interaction is indirect and regulates TMED10 abundance and localization at the Golgi.

The protein resides in the endoplasmic reticulum membrane. The protein localises to the endoplasmic reticulum-Golgi intermediate compartment membrane. It is found in the golgi apparatus membrane. Its subcellular location is the golgi apparatus. It localises to the cis-Golgi network membrane. The protein resides in the trans-Golgi network membrane. The protein localises to the cytoplasmic vesicle. It is found in the secretory vesicle membrane. Its subcellular location is the cell membrane. It localises to the melanosome. Cargo receptor involved in protein vesicular trafficking and quality control in the endoplasmic reticulum (ER) and Golgi. The p24 protein family is a group of transmembrane proteins that bind coat protein complex I/COPI and coat protein complex II/COPII involved in vesicular trafficking between the membranes. Acts at the lumenal side for incorporation of secretory cargo molecules into transport vesicles and involved in vesicle coat formation at the cytoplasmic side. Mainly functions in the early secretory pathway and cycles between the ER, ER-Golgi intermediate compartment (ERGIC) and Golgi, mediating cargo transport through COPI and COPII-coated vesicles. In COPII vesicle-mediated anterograde transport, involved in the transport of GPI-anchored proteins by acting together with TMED2 as their cargo receptor; the function specifically implies SEC24C and SEC24D of the COPII vesicle coat and lipid raft-like microdomains of the ER. Recognizes GPI anchors structural remodeled in the ER by the GPI inositol-deacylase/PGAP1 and the metallophosphoesterase MPPE1/PGAP5. In COPI vesicle-mediated retrograde transport, involved in the biogenesis of COPI vesicles and vesicle coat recruitment. Involved in trafficking of amyloid beta A4 protein and soluble APP-beta release (independent from the modulation of gamma-secretase activity). Involved in the KDELR2-mediated retrograde transport of the toxin A subunit (CTX-A-K63)together with COPI and the COOH terminus of KDELR2. On Golgi membranes, acts as a primary receptor for ARF1-GDP, a GTP-binding protein involved in COPI-vesicle formation. Increases coatomer-dependent GTPase-activating activity of ARFGAP2 which mediates the hydrolysis of ARF1-bound GTP and therefore modulates protein trafficking from the Golgi apparatus. Involved in the exocytic trafficking of G protein-coupled receptors F2LR1/PAR2 (trypsin and tryspin-like enzyme receptor), OPRM1 (opioid receptor) and P2RY4 (UTD and UDP receptor) from the Golgi to the plasma membrane, thus contributing to receptor resensitization. In addition to its cargo receptor activity, may also act as a protein channel after oligomerization, facilitating the post-translational entry of leaderless cytoplasmic cargo into the ERGIC. Involved in the translocation into ERGIC, the vesicle entry and the secretion of leaderless cargos (lacking the secretion signal sequence), including the mature form of interleukin 1/IL-1 family members, the alpha-crystallin B chain HSPB5, the carbohydrate-binding proteins galectin-1/LGALS1 and galectin-3/LGALS3, the microtubule-associated protein Tau/MAPT, and the annexin A1/ANXA1; the translocation process is dependent on cargo protein unfolding and enhanced by chaperones HSP90AB1 and HSP90B1/GRP9. Could also associates with the presenilin-dependent gamma-secretase complex in order to regulate gamma-cleavages of the amyloid beta A4 protein to yield amyloid-beta 40/Abeta40. This Bos taurus (Bovine) protein is Transmembrane emp24 domain-containing protein 10 (TMED10).